A 177-amino-acid polypeptide reads, in one-letter code: Dual-action ribosomal maturation protein DarP (177 aa).

The span at 1-12 (MKIVGDSEHFKQ) shows a compositional bias: basic and acidic residues. Residues 1–26 (MKIVGDSEHFKQPYDSNDEYVSKTED) form a disordered region.

This sequence belongs to the DarP family.

The protein resides in the cytoplasm. Its function is as follows. Member of a network of 50S ribosomal subunit biogenesis factors which assembles along the 30S-50S interface, preventing incorrect 23S rRNA structures from forming. Promotes peptidyl transferase center (PTC) maturation. The protein is Dual-action ribosomal maturation protein DarP of Shewanella oneidensis (strain ATCC 700550 / JCM 31522 / CIP 106686 / LMG 19005 / NCIMB 14063 / MR-1).